We begin with the raw amino-acid sequence, 369 residues long: Endophilin-A (369 aa).

One can recognise a BAR domain in the interval 18–248 (TEKMGGAEGT…LQEKRSEAES (231 aa)). Positions 227 to 247 (QCADVLRGLQETLQEKRSEAE) form a coiled coil. Low complexity predominate over residues 275 to 294 (GTPSHISSSASPLPSPMRSP). Residues 275–296 (GTPSHISSSASPLPSPMRSPAK) are disordered. Residues 305–364 (QQQPCCQALYDFDPENPGELGFKENDIITLLNRVDDNWYEGAVNGRTGYFPQSYVQVQVP) enclose the SH3 domain.

This sequence belongs to the endophilin family.

It is found in the cytoplasm. The protein resides in the membrane. In terms of biological role, required presynaptically at the neuromuscular junction. Implicated in synaptic vesicle endocytosis. The protein is Endophilin-A of Drosophila pseudoobscura pseudoobscura (Fruit fly).